Consider the following 587-residue polypeptide: NADH-quinone oxidoreductase subunit C/D (587 aa).

The tract at residues 1 to 178 (MAAPTTEHAE…EPFSLPDDVQ (178 aa)) is NADH dehydrogenase I subunit C. The NADH dehydrogenase I subunit D stretch occupies residues 202–587 (DFLFLNLGPN…IDFVMADVDR (386 aa)).

The protein in the N-terminal section; belongs to the complex I 30 kDa subunit family. This sequence in the C-terminal section; belongs to the complex I 49 kDa subunit family. NDH-1 is composed of 13 different subunits. Subunits NuoB, CD, E, F, and G constitute the peripheral sector of the complex.

It is found in the cell inner membrane. It catalyses the reaction a quinone + NADH + 5 H(+)(in) = a quinol + NAD(+) + 4 H(+)(out). Its function is as follows. NDH-1 shuttles electrons from NADH, via FMN and iron-sulfur (Fe-S) centers, to quinones in the respiratory chain. The immediate electron acceptor for the enzyme in this species is believed to be ubiquinone. Couples the redox reaction to proton translocation (for every two electrons transferred, four hydrogen ions are translocated across the cytoplasmic membrane), and thus conserves the redox energy in a proton gradient. This Methylococcus capsulatus (strain ATCC 33009 / NCIMB 11132 / Bath) protein is NADH-quinone oxidoreductase subunit C/D.